Consider the following 104-residue polypeptide: Large ribosomal subunit protein uL24 (104 aa).

The disordered stretch occupies residues R82–I104. Over residues K93 to I104 the composition is skewed to basic residues.

It belongs to the universal ribosomal protein uL24 family. As to quaternary structure, part of the 50S ribosomal subunit.

In terms of biological role, one of two assembly initiator proteins, it binds directly to the 5'-end of the 23S rRNA, where it nucleates assembly of the 50S subunit. One of the proteins that surrounds the polypeptide exit tunnel on the outside of the subunit. This chain is Large ribosomal subunit protein uL24, found in Corynebacterium glutamicum (strain R).